We begin with the raw amino-acid sequence, 94 residues long: Large ribosomal subunit protein eL42 (94 aa).

Positions 11, 14, 71, and 74 each coordinate Zn(2+). The C4-type zinc-finger motif lies at 11-74; it reads CPFCKRHTIH…LDLRFRCTVC (64 aa).

It belongs to the eukaryotic ribosomal protein eL42 family. Part of the 50S ribosomal subunit. Requires Zn(2+) as cofactor.

Its function is as follows. Binds to the 23S rRNA. The protein is Large ribosomal subunit protein eL42 of Thermococcus kodakarensis (strain ATCC BAA-918 / JCM 12380 / KOD1) (Pyrococcus kodakaraensis (strain KOD1)).